Consider the following 400-residue polypeptide: tRNA-specific adenosine deaminase 1 (400 aa).

Residues 76–400 (SIATGVKALP…WIPTRTDDVK (325 aa)) enclose the A to I editase domain. Residue His101 coordinates Zn(2+). Glu103 (proton donor) is an active-site residue. Arg108 is a binding site for 1D-myo-inositol hexakisphosphate. Zn(2+)-binding residues include Cys157 and Cys223. 1D-myo-inositol hexakisphosphate-binding residues include Lys226, Arg232, Lys369, and Arg375.

Belongs to the ADAT1 family. 1D-myo-inositol hexakisphosphate is required as a cofactor. Zn(2+) serves as cofactor.

It carries out the reaction adenosine(37) in tRNA(Ala) + H2O + H(+) = inosine(37) in tRNA(Ala) + NH4(+). Functionally, deaminates adenosine-37 to inosine in tRNA-Ala. This Saccharomyces cerevisiae (strain ATCC 204508 / S288c) (Baker's yeast) protein is tRNA-specific adenosine deaminase 1 (TAD1).